A 334-amino-acid chain; its full sequence is Glycerol-3-phosphate dehydrogenase [NAD(P)+] (334 aa).

3 residues coordinate NADPH: Ser-13, Phe-14, and Lys-108. Residues Lys-108, Gly-137, and Thr-139 each contribute to the sn-glycerol 3-phosphate site. An NADPH-binding site is contributed by Ala-141. Residues Lys-193, Asp-246, Ser-256, Arg-257, and Asn-258 each coordinate sn-glycerol 3-phosphate. Lys-193 functions as the Proton acceptor in the catalytic mechanism. Residue Arg-257 participates in NADPH binding. Residues Val-281 and Glu-283 each coordinate NADPH.

It belongs to the NAD-dependent glycerol-3-phosphate dehydrogenase family.

Its subcellular location is the cytoplasm. It catalyses the reaction sn-glycerol 3-phosphate + NAD(+) = dihydroxyacetone phosphate + NADH + H(+). The enzyme catalyses sn-glycerol 3-phosphate + NADP(+) = dihydroxyacetone phosphate + NADPH + H(+). Its pathway is membrane lipid metabolism; glycerophospholipid metabolism. Its function is as follows. Catalyzes the reduction of the glycolytic intermediate dihydroxyacetone phosphate (DHAP) to sn-glycerol 3-phosphate (G3P), the key precursor for phospholipid synthesis. The chain is Glycerol-3-phosphate dehydrogenase [NAD(P)+] from Bartonella tribocorum (strain CIP 105476 / IBS 506).